A 300-amino-acid polypeptide reads, in one-letter code: Cation-efflux pump FieF (300 aa).

Residues 24–44 (LLIKILAWWYTGSVSILAALV) traverse the membrane as a helical segment. 2 residues coordinate Zn(2+): aspartate 45 and aspartate 49. A run of 2 helical transmembrane segments spans residues 82–102 (AALA…LTSI) and 114–134 (PGVG…LVTF). The Zn(2+) site is built by histidine 153 and aspartate 157. A run of 2 helical transmembrane segments spans residues 156–176 (SDVM…YGWH) and 178–198 (ADAL…LRMG).

Belongs to the cation diffusion facilitator (CDF) transporter (TC 2.A.4) family. FieF subfamily. As to quaternary structure, homodimer.

It localises to the cell inner membrane. The enzyme catalyses Zn(2+)(in) + H(+)(out) = Zn(2+)(out) + H(+)(in). It carries out the reaction Cd(2+)(in) + H(+)(out) = Cd(2+)(out) + H(+)(in). It catalyses the reaction Fe(2+)(in) + H(+)(out) = Fe(2+)(out) + H(+)(in). Its function is as follows. Divalent metal cation transporter which exports Zn(2+), Cd(2+) and possibly Fe(2+). May be involved in zinc and iron detoxification by efflux. The protein is Cation-efflux pump FieF of Salmonella agona (strain SL483).